A 720-amino-acid polypeptide reads, in one-letter code: Secreted RxLR effector protein 138 (720 aa).

An N-terminal signal peptide occupies residues 1–20 (MRSAFYVAIVLLVAAGSQTA). The RxLR-dEER motif lies at 56–71 (RNLKDDFMFSAGDEER). The segment at 264 to 335 (ESNTRKRNNV…VAPPEPSRLD (72 aa)) is disordered. Over residues 320–335 (KQHDHRVAPPEPSRLD) the composition is skewed to basic and acidic residues. N-linked (GlcNAc...) asparagine glycosylation occurs at N609.

It belongs to the RxLR effector family.

It is found in the secreted. It localises to the host nucleus. Functionally, secreted effector that acts as an elicitor that induces cell death in host plant cells. In Plasmopara viticola (Downy mildew of grapevine), this protein is Secreted RxLR effector protein 138.